The chain runs to 666 residues: Endogenous retrovirus group K member 24 Gag polyprotein (666 aa).

Residue G2 is the site of N-myristoyl glycine attachment. The tract at residues 165–264 (GKGPELVGPS…APPSRQGSEL (100 aa)) is disordered. The span at 232-247 (GMPPAPQGRAPYPQPP) shows a compositional bias: pro residues. 2 consecutive CCHC-type zinc fingers follow at residues 544–561 (GKCY…NCPV) and 580–597 (DLCP…QCRS). Residues 598–641 (KFDKNGQPLSGNEQRGQPQAPQQTGAFPIQPFVPQGFQGQQPPL) form a disordered region. The segment covering 604 to 622 (QPLSGNEQRGQPQAPQQTG) has biased composition (polar residues). Positions 624 to 640 (FPIQPFVPQGFQGQQPP) are enriched in low complexity.

Belongs to the beta type-B retroviral Gag protein family. HERV class-II K(HML-2) gag subfamily. In terms of processing, myristoylation is essential for retroviral assembly. Alteration of the glycine residue leads to a block in the budding of particles and an accumulation of Gag inside the cell. Specific enzymatic cleavages may yield mature proteins.

The protein localises to the cell membrane. In terms of biological role, the products of the Gag polyproteins of infectious retroviruses perform highly complex orchestrated tasks during the assembly, budding, maturation, and infection stages of the viral replication cycle. During viral assembly, the proteins form membrane associations and self-associations that ultimately result in budding of an immature virion from the infected cell. Gag precursors also function during viral assembly to selectively bind and package two plus strands of genomic RNA. Endogenous Gag proteins may have kept, lost or modified their original function during evolution. This chain is Endogenous retrovirus group K member 24 Gag polyprotein (ERVK-24), found in Homo sapiens (Human).